A 291-amino-acid polypeptide reads, in one-letter code: MKIAVYGKGGIGKSTTSCNISVALARRGQKVLQIGCDPKHDSTFTLTGFLIPTIIDTLQSKDYHYEDIWPEDVIHKGYGGVDCVEAGGPPAGAGCGGYVVGETVKLLKELNAFYEYDIILFDVLGDVVCGGFAAPLNYADYCVIITDNGFDALFAANRITASIREKARTHPLRLAGLVGNRTSRRDLINKYVEACPMPVIEVLPIIEDIRVSRVKGKTLFEMVGSEPSLNYVCNYYLGIADQILSQPEGIVPKEIPDRELFSLLSDLYLNPIGGGGQKKKIQENFLGFTRI.

ATP contacts are provided by residues 10-15 (GIGKST) and lysine 39. A Mg(2+)-binding site is contributed by serine 14. Residues cysteine 95 and cysteine 129 each coordinate [4Fe-4S] cluster. 180-181 (NR) contacts ATP.

This sequence belongs to the NifH/BchL/ChlL family. In terms of assembly, homodimer. Protochlorophyllide reductase is composed of three subunits; ChlL, ChlN and ChlB. The cofactor is [4Fe-4S] cluster.

Its subcellular location is the plastid. The protein resides in the chloroplast. The catalysed reaction is chlorophyllide a + oxidized 2[4Fe-4S]-[ferredoxin] + 2 ADP + 2 phosphate = protochlorophyllide a + reduced 2[4Fe-4S]-[ferredoxin] + 2 ATP + 2 H2O. It functions in the pathway porphyrin-containing compound metabolism; chlorophyll biosynthesis (light-independent). In terms of biological role, component of the dark-operative protochlorophyllide reductase (DPOR) that uses Mg-ATP and reduced ferredoxin to reduce ring D of protochlorophyllide (Pchlide) to form chlorophyllide a (Chlide). This reaction is light-independent. The L component serves as a unique electron donor to the NB-component of the complex, and binds Mg-ATP. The chain is Light-independent protochlorophyllide reductase iron-sulfur ATP-binding protein from Pinus koraiensis (Korean pine).